The chain runs to 566 residues: Putative ABC transporter ATP-binding protein BT9727_2424 (566 aa).

ABC transporter domains are found at residues 5 to 246 and 300 to 533; these read ISFE…GLRE and LKVE…ANLK. ATP is bound by residues 39–46 and 333–340; these read GRSGSGKS and GHNGAGKS.

This sequence belongs to the ABC transporter superfamily.

Its subcellular location is the cell membrane. Probably part of an ABC transporter complex. Responsible for energy coupling to the transport system. The chain is Putative ABC transporter ATP-binding protein BT9727_2424 from Bacillus thuringiensis subsp. konkukian (strain 97-27).